Reading from the N-terminus, the 459-residue chain is Ribulose bisphosphate carboxylase (459 aa).

N111 lines the substrate pocket. The Proton acceptor role is filled by K166. Residue K168 participates in substrate binding. The Mg(2+) site is built by K191, D193, and E194. N6-carboxylysine is present on K191. H287 functions as the Proton acceptor in the catalytic mechanism. Substrate-binding residues include R288, H321, and S368.

Belongs to the RuBisCO large chain family. Type II subfamily. Homodimer. Mg(2+) serves as cofactor.

It is found in the cytoplasm. The enzyme catalyses 2 (2R)-3-phosphoglycerate + 2 H(+) = D-ribulose 1,5-bisphosphate + CO2 + H2O. It catalyses the reaction D-ribulose 1,5-bisphosphate + O2 = 2-phosphoglycolate + (2R)-3-phosphoglycerate + 2 H(+). Functionally, ruBisCO catalyzes two reactions: the carboxylation of D-ribulose 1,5-bisphosphate, the primary event in carbon dioxide fixation, as well as the oxidative fragmentation of the pentose substrate. Both reactions occur simultaneously and in competition at the same active site. The sequence is that of Ribulose bisphosphate carboxylase from Halothiobacillus neapolitanus (strain ATCC 23641 / c2) (Thiobacillus neapolitanus).